The sequence spans 96 residues: uncharacterized protein (96 aa).

This sequence belongs to the NifU family.

This is an uncharacterized protein from Azotobacter vinelandii.